We begin with the raw amino-acid sequence, 270 residues long: tRNA pseudouridine synthase A (270 aa).

The active-site Nucleophile is aspartate 51. Tyrosine 109 contacts substrate.

It belongs to the tRNA pseudouridine synthase TruA family. Homodimer.

The enzyme catalyses uridine(38/39/40) in tRNA = pseudouridine(38/39/40) in tRNA. Its function is as follows. Formation of pseudouridine at positions 38, 39 and 40 in the anticodon stem and loop of transfer RNAs. This Variovorax paradoxus (strain S110) protein is tRNA pseudouridine synthase A.